The primary structure comprises 1477 residues: Neuralized-like protein 4 (1477 aa).

Disordered regions lie at residues 1–26 (MAEL…RKQP) and 168–196 (QPPP…RPDK). In terms of domain architecture, NHR 1 spans 1–167 (MAELHPRTGK…KCTQITVLSC (167 aa)). Acidic residues predominate over residues 171–183 (PEEEEEEDAEEQE). NHR domains are found at residues 250–417 (ALLF…IVHN), 450–616 (QLLF…IMDE), 645–813 (DLRF…LTGG), and 841–1010 (SHRF…TVSS). The tract at residues 1012–1041 (LLEEPDATKPPSITSESEEEEDPADHGDPH) is disordered. The 164-residue stretch at 1048-1211 (SLQFLANHGK…QCEQVSIVTG (164 aa)) folds into the NHR 6 domain.

In terms of processing, ubiquitinated. This ubiquitination leads to proteasomal degradation.

The protein localises to the cytoplasm. Its subcellular location is the cytoskeleton. It is found in the microtubule organizing center. The protein resides in the centrosome. It localises to the centriole. Functionally, promotes CCP110 ubiquitination and proteasome-dependent degradation. By counteracting accumulation of CP110, maintains normal centriolar homeostasis and preventing formation of ectopic microtubular organizing centers. This chain is Neuralized-like protein 4 (neurl4), found in Xenopus tropicalis (Western clawed frog).